The following is a 415-amino-acid chain: Chorismate synthase (415 aa).

The tract at residues 43 to 72 (EDLDRRKPGQSMITTSRGEPDKVSIKSGLQ) is disordered. Arg48 lines the NADP(+) pocket. FMN contacts are provided by residues 125–127 (RSS), Gly304, 319–323 (HAPVS), and Arg346. Residues 262–310 (TDYTEDWEFGESEATASENASGDEPRARGDPKPVGNDHGGIQGGITTGD) form a disordered region. Over residues 298–307 (DHGGIQGGIT) the composition is skewed to gly residues. Positions 379-393 (PDRLDDRPGEYDTDY) are enriched in basic and acidic residues. The segment at 379–415 (PDRLDDRPGEYDTDYHPSSPRNDPEDADTHATTVDED) is disordered.

It belongs to the chorismate synthase family. The cofactor is FMNH2.

The enzyme catalyses 5-O-(1-carboxyvinyl)-3-phosphoshikimate = chorismate + phosphate. It participates in metabolic intermediate biosynthesis; chorismate biosynthesis; chorismate from D-erythrose 4-phosphate and phosphoenolpyruvate: step 7/7. Its function is as follows. Catalyzes the anti-1,4-elimination of the C-3 phosphate and the C-6 proR hydrogen from 5-enolpyruvylshikimate-3-phosphate (EPSP) to yield chorismate, which is the branch point compound that serves as the starting substrate for the three terminal pathways of aromatic amino acid biosynthesis. This reaction introduces a second double bond into the aromatic ring system. This chain is Chorismate synthase, found in Halomicrobium mukohataei (strain ATCC 700874 / DSM 12286 / JCM 9738 / NCIMB 13541) (Haloarcula mukohataei).